Here is a 267-residue protein sequence, read N- to C-terminus: Non-structural protein NS-S (267 aa).

Belongs to the phlebovirus NS-S protein family.

The sequence is that of Non-structural protein NS-S (NSS) from Homo sapiens (Human).